A 334-amino-acid polypeptide reads, in one-letter code: E3 ubiquitin-protein ligase CIP8 (334 aa).

The tract at residues 111-158 (LNSRNEIDDDEDEDEDDGDEEEEDEEENLTVNDEEDEEDDLRRRNRFP) is disordered. Residues 117–149 (IDDDEDEDEDDGDEEEEDEEENLTVNDEEDEED) are compositionally biased toward acidic residues. An RING-type; atypical zinc finger spans residues 257-298 (CAVCKDGMVMGETGKKLPCGHCYHGDCIVPWLGTRNSCPVCR). The disordered stretch occupies residues 307-334 (EYEEERKKRTSTVSDSAAASSSSSTSRY). The segment covering 317–334 (STVSDSAAASSSSSTSRY) has biased composition (low complexity).

As to quaternary structure, interacts with the RING finger of COP1. Interacts with UBC8 through its N-terminal region. Expressed in both light- and dark-grown seedlings.

Its subcellular location is the cytoplasm. It carries out the reaction S-ubiquitinyl-[E2 ubiquitin-conjugating enzyme]-L-cysteine + [acceptor protein]-L-lysine = [E2 ubiquitin-conjugating enzyme]-L-cysteine + N(6)-ubiquitinyl-[acceptor protein]-L-lysine.. Its pathway is protein modification; protein ubiquitination. Its function is as follows. E3 ubiquitin-protein ligase that mediates ubiquitination and subsequent proteasomal degradation of target proteins. Probably forms a minimal ubiquitin ligase complex in cooperation with the E2 enzyme UBC8. Its interaction with COP1 suggests that it may participate in proteasome-mediated degradation of HY5 in vivo. In Arabidopsis thaliana (Mouse-ear cress), this protein is E3 ubiquitin-protein ligase CIP8 (CIP8).